Reading from the N-terminus, the 272-residue chain is TLC domain-containing protein 4 C (272 aa).

7 consecutive transmembrane segments (helical) span residues 16–36 (FSNS…FIIY), 71–91 (VSMI…VESF), 103–123 (SLLM…IICY), 128–148 (LVGT…IYVA), 155–175 (CFVP…PLNM), 196–216 (FVIT…IYLV), and 233–253 (VFIT…FLLI). A TLC domain is found at 61–261 (KKKLEWDQRV…LIKKLYQTYL (201 aa)).

This sequence belongs to the TLCD4 family.

It is found in the membrane. This is TLC domain-containing protein 4 C (tlcd4c) from Dictyostelium discoideum (Social amoeba).